A 227-amino-acid chain; its full sequence is 7-cyano-7-deazaguanine synthase (227 aa).

An ATP-binding site is contributed by 8-18 (LSGGLDSATVL). Zn(2+) is bound by residues Cys-191, Cys-201, Cys-204, and Cys-207.

The protein belongs to the QueC family. Requires Zn(2+) as cofactor.

The enzyme catalyses 7-carboxy-7-deazaguanine + NH4(+) + ATP = 7-cyano-7-deazaguanine + ADP + phosphate + H2O + H(+). It participates in purine metabolism; 7-cyano-7-deazaguanine biosynthesis. Functionally, catalyzes the ATP-dependent conversion of 7-carboxy-7-deazaguanine (CDG) to 7-cyano-7-deazaguanine (preQ(0)). In Paramagnetospirillum magneticum (strain ATCC 700264 / AMB-1) (Magnetospirillum magneticum), this protein is 7-cyano-7-deazaguanine synthase.